The following is a 92-amino-acid chain: C-C motif chemokine 4 (92 aa).

Positions 1 to 23 (MKLCVTVLSLLVLAAAFCSPALS) are cleaved as a signal peptide. Disulfide bonds link cysteine 34-cysteine 58 and cysteine 35-cysteine 74.

It belongs to the intercrine beta (chemokine CC) family. In terms of assembly, homodimer. Interacts with CCR5. Detected in peripheral blood mononuclear cells and lymph nodes.

Its subcellular location is the secreted. Monokine with inflammatory and chemokinetic properties. This Macaca mulatta (Rhesus macaque) protein is C-C motif chemokine 4 (CCL4).